The sequence spans 405 residues: Histone deacetylase clr6 (405 aa).

Residues 6–318 (KKVSYFYDED…WTYETGLLAG (313 aa)) are histone deacetylase. The active site involves histidine 138.

Belongs to the histone deacetylase family. HD type 1 subfamily. As to quaternary structure, heterotetramer of alp13, clr6, prw1 and pst2.

It localises to the nucleus. The catalysed reaction is N(6)-acetyl-L-lysyl-[histone] + H2O = L-lysyl-[histone] + acetate. Responsible for the deacetylation of lysine residues on the N-terminal part of the core histones (H2A, H2B, H3 and H4). Histone deacetylation gives a tag for epigenetic repression and plays an important role in transcriptional regulation, cell cycle progression and developmental events. Histone deacetylases act via the formation of large multiprotein complexes. Has a role in chromatin assembly and chromosome segregation. In Schizosaccharomyces pombe (strain 972 / ATCC 24843) (Fission yeast), this protein is Histone deacetylase clr6 (clr6).